A 544-amino-acid polypeptide reads, in one-letter code: Membrane protein insertase YidC (544 aa).

5 helical membrane passes run 15-35, 321-341, 343-363, 409-429, and 506-526; these read LFLIGLFMLINDIFSSIMLSF, LWYLIQVPMQMVMQVFYDVIP, WGLSIIFLTIVVRILIFPLTF, LGGCFPVILQLPIFFALYSLV, and MPIMFFFILYNMPSGLLIYWI.

It belongs to the OXA1/ALB3/YidC family. Type 1 subfamily. Interacts with the Sec translocase complex via SecD. Specifically interacts with transmembrane segments of nascent integral membrane proteins during membrane integration.

It localises to the cell inner membrane. In terms of biological role, required for the insertion and/or proper folding and/or complex formation of integral membrane proteins into the membrane. Involved in integration of membrane proteins that insert both dependently and independently of the Sec translocase complex, as well as at least some lipoproteins. Aids folding of multispanning membrane proteins. This is Membrane protein insertase YidC from Borrelia garinii subsp. bavariensis (strain ATCC BAA-2496 / DSM 23469 / PBi) (Borreliella bavariensis).